Here is a 354-residue protein sequence, read N- to C-terminus: Phospho-N-acetylmuramoyl-pentapeptide-transferase (354 aa).

The next 10 membrane-spanning stretches (helical) occupy residues 27–47 (ATLL…INML), 73–93 (TMGG…WMDV), 97–117 (LVWA…LDDY), 138–158 (FVVA…YVPV), 162–182 (LYVP…VGAG), 193–213 (GLAI…AYLA), 230–250 (AGEL…FLWF), 256–276 (AVFM…VIAV), 282–302 (IVLA…IVQV), and 331–351 (TVVI…LATL).

Belongs to the glycosyltransferase 4 family. MraY subfamily. Mg(2+) serves as cofactor.

Its subcellular location is the cell inner membrane. It catalyses the reaction UDP-N-acetyl-alpha-D-muramoyl-L-alanyl-gamma-D-glutamyl-meso-2,6-diaminopimeloyl-D-alanyl-D-alanine + di-trans,octa-cis-undecaprenyl phosphate = di-trans,octa-cis-undecaprenyl diphospho-N-acetyl-alpha-D-muramoyl-L-alanyl-D-glutamyl-meso-2,6-diaminopimeloyl-D-alanyl-D-alanine + UMP. Its pathway is cell wall biogenesis; peptidoglycan biosynthesis. In terms of biological role, catalyzes the initial step of the lipid cycle reactions in the biosynthesis of the cell wall peptidoglycan: transfers peptidoglycan precursor phospho-MurNAc-pentapeptide from UDP-MurNAc-pentapeptide onto the lipid carrier undecaprenyl phosphate, yielding undecaprenyl-pyrophosphoryl-MurNAc-pentapeptide, known as lipid I. The protein is Phospho-N-acetylmuramoyl-pentapeptide-transferase of Novosphingobium aromaticivorans (strain ATCC 700278 / DSM 12444 / CCUG 56034 / CIP 105152 / NBRC 16084 / F199).